The chain runs to 179 residues: O-acetyl-ADP-ribose deacetylase (179 aa).

Residues Met-1 to Gly-175 form the Macro domain. Substrate-binding positions include Asp-11–Ile-12, Asn-25, Gly-33–Asp-35, and Ser-122–Tyr-126. Asp-35 acts as the Proton acceptor in catalysis.

Belongs to the MacroD-type family. YmdB subfamily. As to quaternary structure, homodimer. Interacts with RNase III.

It catalyses the reaction 3''-O-acetyl-ADP-D-ribose + H2O = ADP-D-ribose + acetate + H(+). The catalysed reaction is 2''-O-acetyl-ADP-D-ribose + H2O = ADP-D-ribose + acetate + H(+). Functionally, deacetylates O-acetyl-ADP ribose to yield ADP-ribose and free acetate. Down-regulates ribonuclease 3 (RNase III) activity. Acts by interacting directly with the region of the ribonuclease that is required for dimerization/activation. The chain is O-acetyl-ADP-ribose deacetylase from Salmonella typhi.